Reading from the N-terminus, the 621-residue chain is Kelch-like protein 6 (621 aa).

The BTB domain occupies 72-139; the sequence is TDVILCVDIQ…TYTSKALITK (68 aa). The BACK domain occupies 174 to 276; sequence CVGILRLADT…DPWYFVETVE (103 aa). 6 Kelch repeats span residues 320–367, 378–421, 422–468, 470–516, 517–558, and 560–606; these read VFMI…NKKW, EVYI…VLGG, KVYV…SHKK, LYVI…SFRD, RIYV…PCNN, and LYIT…TIRK.

Found in germinal center B-cells.

Involved in B-lymphocyte antigen receptor signaling and germinal center formation. The protein is Kelch-like protein 6 (KLHL6) of Homo sapiens (Human).